We begin with the raw amino-acid sequence, 286 residues long: Pantothenate synthetase (286 aa).

30–37 (MGNLHAGH) provides a ligand contact to ATP. His37 serves as the catalytic Proton donor. Gln61 contributes to the (R)-pantoate binding site. Gln61 contributes to the beta-alanine binding site. ATP is bound at residue 149–152 (GEKD). Position 155 (Gln155) interacts with (R)-pantoate. ATP is bound by residues Val178 and 186-189 (MSSR).

This sequence belongs to the pantothenate synthetase family. Homodimer.

It is found in the cytoplasm. It carries out the reaction (R)-pantoate + beta-alanine + ATP = (R)-pantothenate + AMP + diphosphate + H(+). Its pathway is cofactor biosynthesis; (R)-pantothenate biosynthesis; (R)-pantothenate from (R)-pantoate and beta-alanine: step 1/1. Its function is as follows. Catalyzes the condensation of pantoate with beta-alanine in an ATP-dependent reaction via a pantoyl-adenylate intermediate. In Thioalkalivibrio sulfidiphilus (strain HL-EbGR7), this protein is Pantothenate synthetase.